The sequence spans 248 residues: 1-(5-phosphoribosyl)-5-[(5-phosphoribosylamino)methylideneamino] imidazole-4-carboxamide isomerase (248 aa).

Asp-8 functions as the Proton acceptor in the catalytic mechanism. The active-site Proton donor is Asp-131.

This sequence belongs to the HisA/HisF family.

It is found in the cytoplasm. The enzyme catalyses 1-(5-phospho-beta-D-ribosyl)-5-[(5-phospho-beta-D-ribosylamino)methylideneamino]imidazole-4-carboxamide = 5-[(5-phospho-1-deoxy-D-ribulos-1-ylimino)methylamino]-1-(5-phospho-beta-D-ribosyl)imidazole-4-carboxamide. The protein operates within amino-acid biosynthesis; L-histidine biosynthesis; L-histidine from 5-phospho-alpha-D-ribose 1-diphosphate: step 4/9. This is 1-(5-phosphoribosyl)-5-[(5-phosphoribosylamino)methylideneamino] imidazole-4-carboxamide isomerase from Paracidovorax citrulli (strain AAC00-1) (Acidovorax citrulli).